The sequence spans 333 residues: tRNA-dihydrouridine(16) synthase (333 aa).

Residues 19 to 21 (PMQ) and Gln-80 contribute to the FMN site. Cys-110 acts as the Proton donor in catalysis. FMN is bound by residues Lys-151, 211 to 213 (NGD), and 235 to 236 (GR).

This sequence belongs to the Dus family. DusC subfamily. Requires FMN as cofactor.

The catalysed reaction is 5,6-dihydrouridine(16) in tRNA + NADP(+) = uridine(16) in tRNA + NADPH + H(+). The enzyme catalyses 5,6-dihydrouridine(16) in tRNA + NAD(+) = uridine(16) in tRNA + NADH + H(+). Catalyzes the synthesis of 5,6-dihydrouridine (D), a modified base found in the D-loop of most tRNAs, via the reduction of the C5-C6 double bond in target uridines. Specifically modifies U16 in tRNAs. The polypeptide is tRNA-dihydrouridine(16) synthase (Neisseria meningitidis serogroup A / serotype 4A (strain DSM 15465 / Z2491)).